The sequence spans 485 residues: Proline betaine:corrinoid methyltransferase (485 aa).

The protein belongs to the trimethylamine methyltransferase family. In terms of assembly, the proline betaine:THF methyl transfer system is composed of two methyltransferases, MtpB and MtqA, and the corrinoid protein MtqC.

It carries out the reaction Co(I)-[quaternary-amine-specific corrinoid protein] + L-proline betaine + H(+) = methyl-Co(III)-[quaternary-amine-specific corrinoid protein] + N-methyl-L-proline. Its function is as follows. Involved in the degradation of the quaternary amine L-proline betaine. Component of a corrinoid-dependent methyltransferase system that transfers a methyl group from L-proline betaine to tetrahydrofolate (THF), forming methyl-THF, a key intermediate in the Wood-Ljungdahl acetogenesis pathway. MtpB catalyzes the methylation of the corrinoid protein MtqC, using L-proline betaine as the methyl donor. Shows weak activity with some other quaternary amines, including carnitine, phosphocholine, glycine betaine or betonicine, but cannot methylate free cob(I)alamin. In Eubacterium limosum, this protein is Proline betaine:corrinoid methyltransferase.